Reading from the N-terminus, the 525-residue chain is Probable protein kinase UbiB (525 aa).

The Protein kinase domain occupies glutamate 118 to alanine 500. Residues valine 124 to valine 132 and lysine 150 each bind ATP. The active-site Proton acceptor is aspartate 285. Residues leucine 501–leucine 521 form a helical membrane-spanning segment.

It belongs to the ABC1 family. UbiB subfamily.

It localises to the cell inner membrane. Its pathway is cofactor biosynthesis; ubiquinone biosynthesis [regulation]. In terms of biological role, is probably a protein kinase regulator of UbiI activity which is involved in aerobic coenzyme Q (ubiquinone) biosynthesis. This Burkholderia mallei (strain SAVP1) protein is Probable protein kinase UbiB.